The following is a 432-amino-acid chain: Adenylosuccinate synthetase (432 aa).

Residues 13–19 (GDEGKGK) and 41–43 (GHT) contribute to the GTP site. Catalysis depends on aspartate 14, which acts as the Proton acceptor. Mg(2+) contacts are provided by aspartate 14 and glycine 41. IMP contacts are provided by residues 14–17 (DEGK), 39–42 (NAGH), threonine 130, arginine 144, glutamine 225, threonine 240, and arginine 304. Catalysis depends on histidine 42, which acts as the Proton donor. 300–306 (AVTGRPR) serves as a coordination point for substrate. Residues arginine 306, 332–334 (KLD), and 415–417 (STG) each bind GTP.

The protein belongs to the adenylosuccinate synthetase family. As to quaternary structure, homodimer. Requires Mg(2+) as cofactor.

It is found in the cytoplasm. The catalysed reaction is IMP + L-aspartate + GTP = N(6)-(1,2-dicarboxyethyl)-AMP + GDP + phosphate + 2 H(+). The protein operates within purine metabolism; AMP biosynthesis via de novo pathway; AMP from IMP: step 1/2. Its function is as follows. Plays an important role in the de novo pathway of purine nucleotide biosynthesis. Catalyzes the first committed step in the biosynthesis of AMP from IMP. This Haemophilus influenzae (strain 86-028NP) protein is Adenylosuccinate synthetase.